The following is a 387-amino-acid chain: Gamma-butyrobetaine dioxygenase (387 aa).

Cys-38, Cys-40, Cys-43, and His-82 together coordinate Zn(2+). Residues His-202, Asp-204, and His-347 each coordinate Fe cation. Ser-351 carries the post-translational modification Phosphoserine.

Belongs to the gamma-BBH/TMLD family. The cofactor is Fe(2+). Requires L-ascorbate as cofactor.

The protein resides in the cytoplasm. It catalyses the reaction 4-(trimethylamino)butanoate + 2-oxoglutarate + O2 = carnitine + succinate + CO2. It participates in amine and polyamine biosynthesis; carnitine biosynthesis. Catalyzes the formation of L-carnitine from gamma-butyrobetaine. The polypeptide is Gamma-butyrobetaine dioxygenase (Bbox1) (Mus musculus (Mouse)).